Here is a 329-residue protein sequence, read N- to C-terminus: Major outer membrane protein P.IB (329 aa).

The N-terminal stretch at 1 to 19 (MKKSLIALTLAALPVAAMA) is a signal peptide.

It belongs to the Gram-negative porin family. As to quaternary structure, homotrimer.

The protein localises to the cell outer membrane. Serves as a slightly cation selective porin. This is Major outer membrane protein P.IB (porB) from Neisseria meningitidis serogroup A / serotype 4A (strain DSM 15465 / Z2491).